We begin with the raw amino-acid sequence, 66 residues long: VRDAYIAQNYNCVYDCARDAYCNDLCTKNGAKSGYCEWFGPHGDACWCIDLPNNVPIKVEGKCHRK.

Residues 2–64 (RDAYIAQNYN…VPIKVEGKCH (63 aa)) enclose the LCN-type CS-alpha/beta domain. Disulfide bonds link cysteine 12/cysteine 63, cysteine 16/cysteine 36, cysteine 22/cysteine 46, and cysteine 26/cysteine 48.

This sequence belongs to the long (4 C-C) scorpion toxin superfamily. Sodium channel inhibitor family. Alpha subfamily. Expressed by the venom gland.

Its subcellular location is the secreted. Its function is as follows. Alpha toxins bind voltage-independently at site-3 of sodium channels (Nav) and inhibit the inactivation of the activated channels, thereby blocking neuronal transmission. This is Toxin Boma6a from Buthus occitanus mardochei (Moroccan scorpion).